The sequence spans 125 residues: Large ribosomal subunit protein bL20 (125 aa).

This sequence belongs to the bacterial ribosomal protein bL20 family.

In terms of biological role, binds directly to 23S ribosomal RNA and is necessary for the in vitro assembly process of the 50S ribosomal subunit. It is not involved in the protein synthesizing functions of that subunit. The chain is Large ribosomal subunit protein bL20 from Thermobifida fusca (strain YX).